The sequence spans 399 residues: ATP-dependent RNA helicase FAL1 (399 aa).

Positions 26–54 match the Q motif motif; the sequence is ATFESMNLKPDLLKGIYGYGFEAPSAIQS. The region spanning 57 to 227 is the Helicase ATP-binding domain; that stretch reads IMQIINGRDT…NKFTTDPVKI (171 aa). 70-77 contributes to the ATP binding site; the sequence is AQSGTGKT. The short motif at 175–178 is the DEAD box element; it reads DEAD. One can recognise a Helicase C-terminal domain in the interval 238–399; the sequence is GIKQYHVQCE…EMPMNINDIM (162 aa).

Belongs to the DEAD box helicase family. DDX48/FAL1 subfamily.

It is found in the nucleus. It localises to the nucleolus. The enzyme catalyses ATP + H2O = ADP + phosphate + H(+). In terms of biological role, ATP-dependent RNA helicase involved in 40S ribosomal subunit biogenesis. Required for the processing and cleavage of 35S pre-rRNA at sites A0, A1, and A2, leading to mature 18S rRNA. The protein is ATP-dependent RNA helicase FAL1 (FAL1) of Scheffersomyces stipitis (strain ATCC 58785 / CBS 6054 / NBRC 10063 / NRRL Y-11545) (Yeast).